The primary structure comprises 405 residues: Probable tRNA sulfurtransferase (405 aa).

Positions 60 to 165 (DQVMARLSQV…REAIYLSTKT (106 aa)) constitute a THUMP domain. Residues 183–184 (ML), 208–209 (HF), Arg265, Gly287, and Gln296 contribute to the ATP site.

This sequence belongs to the ThiI family.

It localises to the cytoplasm. It catalyses the reaction [ThiI sulfur-carrier protein]-S-sulfanyl-L-cysteine + a uridine in tRNA + 2 reduced [2Fe-2S]-[ferredoxin] + ATP + H(+) = [ThiI sulfur-carrier protein]-L-cysteine + a 4-thiouridine in tRNA + 2 oxidized [2Fe-2S]-[ferredoxin] + AMP + diphosphate. The enzyme catalyses [ThiS sulfur-carrier protein]-C-terminal Gly-Gly-AMP + S-sulfanyl-L-cysteinyl-[cysteine desulfurase] + AH2 = [ThiS sulfur-carrier protein]-C-terminal-Gly-aminoethanethioate + L-cysteinyl-[cysteine desulfurase] + A + AMP + 2 H(+). Its pathway is cofactor biosynthesis; thiamine diphosphate biosynthesis. In terms of biological role, catalyzes the ATP-dependent transfer of a sulfur to tRNA to produce 4-thiouridine in position 8 of tRNAs, which functions as a near-UV photosensor. Also catalyzes the transfer of sulfur to the sulfur carrier protein ThiS, forming ThiS-thiocarboxylate. This is a step in the synthesis of thiazole, in the thiamine biosynthesis pathway. The sulfur is donated as persulfide by IscS. This is Probable tRNA sulfurtransferase from Lacticaseibacillus paracasei (strain ATCC 334 / BCRC 17002 / CCUG 31169 / CIP 107868 / KCTC 3260 / NRRL B-441) (Lactobacillus paracasei).